The chain runs to 181 residues: UPF0228 protein MA_3117 (181 aa).

Belongs to the UPF0228 family.

This chain is UPF0228 protein MA_3117, found in Methanosarcina acetivorans (strain ATCC 35395 / DSM 2834 / JCM 12185 / C2A).